Here is a 480-residue protein sequence, read N- to C-terminus: MAARCSTRWLLVVVGTPRLPAISGRGARPPREGVVGAWLSRKLSVPAFASSLTSCGPRALLTLRPGVSLTGTKHNPFICTASFHTSAPLAKEDYYQILGVPRNASQKEIKKAYYQLAKKYHPDTNKDDPKAKEKFSQLAEAYEVLSDEVKRKQYDAYGSAGFDPGASGSQHSYWKGGPTVDPEELFRKIFGEFSSSSFGDFQTVFDQPQEYFMELTFNQAAKGVNKEFTVNIMDTCERCNGKGNEPGTKVQHCHYCGGSGMETINTGPFVMRSTCRRCGGRGSIIISPCVVCRGAGQAKQKKRVMIPVPAGVEDGQTVRMPVGKREIFITFRVQKSPVFRRDGADIHSDLFISIAQALLGGTARAQGLYETINVTIPPGTQTDQKIRMGGKGIPRINSYGYGDHYIHIKIRVPKRLTSRQQSLILSYAEDETDVEGTVNGVTLTSSGGSTMDSSAGSKARREAGEDEEGFLSKLKKMFTS.

R58 is subject to Omega-N-methylarginine; by CARM1. The J domain occupies 93 to 158 (DYYQILGVPR…VKRKQYDAYG (66 aa)). At K134 the chain carries N6-acetyllysine. The segment at 223–301 (GVNKEFTVNI…CRGAGQAKQK (79 aa)) adopts a CR-type zinc-finger fold. Residue C236 participates in Zn(2+) binding. CXXCXGXG motif repeat units follow at residues 236–243 (CERCNGKG), 253–260 (CHYCGGSG), 275–282 (CRRCGGRG), and 289–296 (CVVCRGAG). Omega-N-methylarginine; by CARM1 is present on R238. Zn(2+)-binding residues include C239, C253, C256, C275, C278, C289, and C292. R293 bears the Omega-N-methylarginine; by CARM1 mark. Phosphoserine is present on S398. A compositionally biased stretch (polar residues) spans 443–456 (LTSSGGSTMDSSAG). The disordered stretch occupies residues 443–471 (LTSSGGSTMDSSAGSKARREAGEDEEGFL).

Interacts with JAK2, HSPA9B and IFN-gammaR2 chain. Interacts with Ras GTPase-activating protein 1 (RASA1). Isoform 2 interacts with MUSK (via the cytoplasmic domain). In terms of processing, tyrosine phosphorylated. In terms of tissue distribution, widely expressed with highest levels in heart, liver, lung and skeletal muscles. Also expressed in keratinocytes; expression level and distribution is altered in basal cell carcinomas.

The protein localises to the mitochondrion matrix. It is found in the cytoplasm. Its subcellular location is the cytosol. It localises to the postsynaptic cell membrane. Modulates apoptotic signal transduction or effector structures within the mitochondrial matrix. Affect cytochrome C release from the mitochondria and caspase 3 activation, but not caspase 8 activation. Isoform 1 increases apoptosis triggered by both TNF and the DNA-damaging agent mytomycin C; in sharp contrast, isoform 2 suppresses apoptosis. Can modulate IFN-gamma-mediated transcriptional activity. Isoform 2 may play a role in neuromuscular junction development as an effector of the MUSK signaling pathway. The protein is DnaJ homolog subfamily A member 3, mitochondrial (DNAJA3) of Homo sapiens (Human).